A 474-amino-acid chain; its full sequence is Aspartic-type endopeptidase ctsD (474 aa).

The signal sequence occupies residues 1–19 (MHLLQCLLSTISLASTVTA). Residues 106 to 413 (YFATVRVGSQ…DYDNHRIGFA (308 aa)) enclose the Peptidase A1 domain. D124 is a catalytic residue. 4 N-linked (GlcNAc...) asparagine glycosylation sites follow: N189, N197, N275, and N301. D307 is an active-site residue. N338, N344, and N414 each carry an N-linked (GlcNAc...) asparagine glycan. The GPI-anchor amidated serine moiety is linked to residue S452. A propeptide spans 453–474 (ASIVSRFVHWPFIFALLCMVLV) (removed in mature form).

It belongs to the peptidase A1 family.

Its subcellular location is the cell membrane. Functionally, secreted aspartic-type endopeptidase which is secreted and contributes to virulence. This Aspergillus fumigatus (strain ATCC MYA-4609 / CBS 101355 / FGSC A1100 / Af293) (Neosartorya fumigata) protein is Aspartic-type endopeptidase ctsD (ctsD).